A 115-amino-acid polypeptide reads, in one-letter code: U3-lycotoxin-Ls1i (115 aa).

Positions 1–20 (MKFVLLFGVFLVTLFSYSSA) are cleaved as a signal peptide. The propeptide occupies 21–44 (EMLDDFDQADEDELLSLIEKEEAR). 4 disulfide bridges follow: Cys-48–Cys-63, Cys-55–Cys-72, Cys-62–Cys-87, and Cys-74–Cys-85.

The protein belongs to the neurotoxin 19 (CSTX) family. 01 subfamily. Expressed by the venom gland.

It is found in the secreted. This Lycosa singoriensis (Wolf spider) protein is U3-lycotoxin-Ls1i.